We begin with the raw amino-acid sequence, 391 residues long: Formate-dependent phosphoribosylglycinamide formyltransferase (391 aa).

N(1)-(5-phospho-beta-D-ribosyl)glycinamide-binding positions include 18-19 (EL) and E78. ATP is bound by residues R110, K151, 156 to 161 (SSGKGQ), 191 to 194 (EEFI), and E199. Residues 115-305 (DLAAQQLGLR…EFELHLRAVL (191 aa)) form the ATP-grasp domain. Mg(2+)-binding residues include E264 and E276. N(1)-(5-phospho-beta-D-ribosyl)glycinamide-binding positions include D283, K353, and 360–361 (RR).

This sequence belongs to the PurK/PurT family. In terms of assembly, homodimer.

It catalyses the reaction N(1)-(5-phospho-beta-D-ribosyl)glycinamide + formate + ATP = N(2)-formyl-N(1)-(5-phospho-beta-D-ribosyl)glycinamide + ADP + phosphate + H(+). It functions in the pathway purine metabolism; IMP biosynthesis via de novo pathway; N(2)-formyl-N(1)-(5-phospho-D-ribosyl)glycinamide from N(1)-(5-phospho-D-ribosyl)glycinamide (formate route): step 1/1. In terms of biological role, involved in the de novo purine biosynthesis. Catalyzes the transfer of formate to 5-phospho-ribosyl-glycinamide (GAR), producing 5-phospho-ribosyl-N-formylglycinamide (FGAR). Formate is provided by PurU via hydrolysis of 10-formyl-tetrahydrofolate. The sequence is that of Formate-dependent phosphoribosylglycinamide formyltransferase from Synechococcus elongatus (strain ATCC 33912 / PCC 7942 / FACHB-805) (Anacystis nidulans R2).